A 498-amino-acid chain; its full sequence is Protein translocase subunit SecY (498 aa).

10 consecutive transmembrane segments (helical) span residues 23–43, 65–87, 124–144, 163–183, 191–211, 229–249, 281–301, 322–342, 382–402, and 406–426; these read FVISVFVTLFLILLFRVISVI, FDLFNLLGGGGLSQLSLFAVGIS, ITRFVTLPFAVVQAFAIIALI, AFYIVTMTAGTYIGIFIGDII, GITLLILSGILARLPDGFIVM, AINFSLYFLAFLVLLLAISFV, AAGVIPVIFASSIMSIPITIA, PVGISLYVILIIIFTFFYSYI, FIGAPFLAIVAVIPYIISLVL, and TTLSLGGTGIIIMVSASMELY. Positions 478 to 488 are enriched in basic and acidic residues; that stretch reads VEPTQDKKKNP. Residues 478-498 are disordered; it reads VEPTQDKKKNPSDPLEVSQLW.

Belongs to the SecY/SEC61-alpha family. Component of the Sec protein translocase complex. Heterotrimer consisting of SecY, SecE and SecG subunits. The heterotrimers can form oligomers, although 1 heterotrimer is thought to be able to translocate proteins. Interacts with the ribosome. Interacts with SecDF, and other proteins may be involved. Interacts with SecA.

The protein resides in the cell membrane. Its function is as follows. The central subunit of the protein translocation channel SecYEG. Consists of two halves formed by TMs 1-5 and 6-10. These two domains form a lateral gate at the front which open onto the bilayer between TMs 2 and 7, and are clamped together by SecE at the back. The channel is closed by both a pore ring composed of hydrophobic SecY resides and a short helix (helix 2A) on the extracellular side of the membrane which forms a plug. The plug probably moves laterally to allow the channel to open. The ring and the pore may move independently. The chain is Protein translocase subunit SecY from Mycoplasmoides gallisepticum (strain R(low / passage 15 / clone 2)) (Mycoplasma gallisepticum).